Consider the following 221-residue polypeptide: Orotate phosphoribosyltransferase (221 aa).

K26 provides a ligand contact to 5-phospho-alpha-D-ribose 1-diphosphate. Position 34 to 35 (34 to 35) interacts with orotate; the sequence is FF. 5-phospho-alpha-D-ribose 1-diphosphate contacts are provided by residues 72-73, R98, K99, K102, H104, and 123-131; these read YK and DDVISAGTS. Residues S127 and R155 each contribute to the orotate site.

This sequence belongs to the purine/pyrimidine phosphoribosyltransferase family. PyrE subfamily. As to quaternary structure, homodimer. Requires Mg(2+) as cofactor.

It catalyses the reaction orotidine 5'-phosphate + diphosphate = orotate + 5-phospho-alpha-D-ribose 1-diphosphate. The protein operates within pyrimidine metabolism; UMP biosynthesis via de novo pathway; UMP from orotate: step 1/2. In terms of biological role, catalyzes the transfer of a ribosyl phosphate group from 5-phosphoribose 1-diphosphate to orotate, leading to the formation of orotidine monophosphate (OMP). This chain is Orotate phosphoribosyltransferase, found in Janthinobacterium sp. (strain Marseille) (Minibacterium massiliensis).